The primary structure comprises 387 residues: 3-ketoacyl-CoA thiolase (387 aa).

C91 (acyl-thioester intermediate) is an active-site residue. Catalysis depends on proton acceptor residues H343 and C373.

The protein belongs to the thiolase-like superfamily. Thiolase family. Heterotetramer of two alpha chains (FadB) and two beta chains (FadA).

The protein localises to the cytoplasm. It carries out the reaction an acyl-CoA + acetyl-CoA = a 3-oxoacyl-CoA + CoA. Its pathway is lipid metabolism; fatty acid beta-oxidation. In terms of biological role, catalyzes the final step of fatty acid oxidation in which acetyl-CoA is released and the CoA ester of a fatty acid two carbons shorter is formed. The sequence is that of 3-ketoacyl-CoA thiolase from Shewanella denitrificans (strain OS217 / ATCC BAA-1090 / DSM 15013).